The following is a 435-amino-acid chain: uncharacterized protein (435 aa).

S-adenosyl-L-methionine contacts are provided by glutamine 261, tyrosine 294, glutamate 318, and aspartate 366. Cysteine 393 acts as the Nucleophile in catalysis.

Belongs to the class I-like SAM-binding methyltransferase superfamily. RNA M5U methyltransferase family.

This is an uncharacterized protein from Bifidobacterium longum (strain NCC 2705).